The primary structure comprises 291 residues: Ribosomal RNA small subunit methyltransferase H (291 aa).

Residues 31 to 33 (GGY), D49, F76, D97, and Q104 each bind S-adenosyl-L-methionine.

It belongs to the methyltransferase superfamily. RsmH family.

Its subcellular location is the cytoplasm. The enzyme catalyses cytidine(1402) in 16S rRNA + S-adenosyl-L-methionine = N(4)-methylcytidine(1402) in 16S rRNA + S-adenosyl-L-homocysteine + H(+). Its function is as follows. Specifically methylates the N4 position of cytidine in position 1402 (C1402) of 16S rRNA. The protein is Ribosomal RNA small subunit methyltransferase H of Anaplasma marginale (strain St. Maries).